The chain runs to 224 residues: Cytidylate kinase (224 aa).

Residue 11-19 (GPAAAGKST) participates in ATP binding.

It belongs to the cytidylate kinase family. Type 1 subfamily.

The protein localises to the cytoplasm. The catalysed reaction is CMP + ATP = CDP + ADP. It carries out the reaction dCMP + ATP = dCDP + ADP. This Bacillus velezensis (strain DSM 23117 / BGSC 10A6 / LMG 26770 / FZB42) (Bacillus amyloliquefaciens subsp. plantarum) protein is Cytidylate kinase.